A 240-amino-acid chain; its full sequence is Large ribosomal subunit protein uL2 (240 aa).

The disordered stretch occupies residues 199–240 (DHPFGGGGRQHPGRPKSVSRDAAPGRKVGDIASKRTGRGGNE). A compositionally biased stretch (basic and acidic residues) spans 221 to 231 (APGRKVGDIAS).

This sequence belongs to the universal ribosomal protein uL2 family. As to quaternary structure, part of the 50S ribosomal subunit. Forms a bridge to the 30S subunit in the 70S ribosome.

One of the primary rRNA binding proteins. Required for association of the 30S and 50S subunits to form the 70S ribosome, for tRNA binding and peptide bond formation. It has been suggested to have peptidyltransferase activity; this is somewhat controversial. Makes several contacts with the 16S rRNA in the 70S ribosome. This is Large ribosomal subunit protein uL2 from Halobacterium salinarum (strain ATCC 29341 / DSM 671 / R1).